The sequence spans 404 residues: Multidrug resistance protein MdtG (404 aa).

11 helical membrane-spanning segments follow: residues 19-39, 56-76, 90-110, 113-133, 144-164, 171-191, 222-242, 254-274, 288-308, 317-337, and 376-396; these read LGCFLTGAAFSLVMPFLPLYV, LVFSITFLFSAIASPFWGGLA, LGMAIVMLLMGMAQNIWQFLI, ALLGLLGGFIPNANALIATQA, TLSTGGVSGALLGPLAGGLLA, PVFFITASVLFICFLLTFFFI, LFVTTLIIQVATGSIAPILTL, IAFISGMIASVPGVAALLSAP, ILIVALIISVLLLIPMSFVQT, FLLGAADGALLPAVQTLLVYN, and AVFCVTAGVVLFNAIYSWNSL.

It belongs to the major facilitator superfamily. DHA1 family. MdtG (TC 2.A.1.2.20) subfamily.

It is found in the cell inner membrane. The protein is Multidrug resistance protein MdtG of Salmonella paratyphi A (strain ATCC 9150 / SARB42).